We begin with the raw amino-acid sequence, 239 residues long: Adenylate dimethylallyltransferase (239 aa).

The protein belongs to the isopentenyl transferase family.

It carries out the reaction dimethylallyl diphosphate + AMP = N(6)-(dimethylallyl)adenosine 5'-phosphate + diphosphate. Its function is as follows. Transfers dimethylallyl groups to AMP as part of the biosynthesis of cytokinin phytohormones. The chain is Adenylate dimethylallyltransferase (ipt) from Rhizobium radiobacter (Agrobacterium tumefaciens).